The sequence spans 107 residues: MLSGEAEQLRLKHLVHCRRHKCFARDSGEFCYFELPEDHIEGPAHGVRLTAQGELARSLIREFTQRPLLVERDRGPCVLTVICNCPNLGLHQDLCCHLCAEYNKYRN.

It belongs to the adenoviridae E3A-2 family.

Not yet known. In Human adenovirus C serotype 5 (HAdV-5), this protein is Early E3A 12.5 kDa protein.